Consider the following 134-residue polypeptide: Small ribosomal subunit protein bS6 (134 aa).

The tract at residues 97–134 is disordered; sequence TDVSPIKASEGREDRRSAPQREERNHDNSDEVSEESED. The span at 105-125 shows a compositional bias: basic and acidic residues; that stretch reads SEGREDRRSAPQREERNHDNS.

The protein belongs to the bacterial ribosomal protein bS6 family.

Binds together with bS18 to 16S ribosomal RNA. The polypeptide is Small ribosomal subunit protein bS6 (Marinomonas sp. (strain MWYL1)).